The chain runs to 606 residues: Elongation factor 4 (606 aa).

The tr-type G domain occupies 10–192 (KNIRNFSIIA…ALVARVPPPQ (183 aa)). GTP-binding positions include 22–27 (DHGKST) and 139–142 (NKID).

Belongs to the TRAFAC class translation factor GTPase superfamily. Classic translation factor GTPase family. LepA subfamily.

Its subcellular location is the cell inner membrane. It carries out the reaction GTP + H2O = GDP + phosphate + H(+). Functionally, required for accurate and efficient protein synthesis under certain stress conditions. May act as a fidelity factor of the translation reaction, by catalyzing a one-codon backward translocation of tRNAs on improperly translocated ribosomes. Back-translocation proceeds from a post-translocation (POST) complex to a pre-translocation (PRE) complex, thus giving elongation factor G a second chance to translocate the tRNAs correctly. Binds to ribosomes in a GTP-dependent manner. In Nitrosococcus oceani (strain ATCC 19707 / BCRC 17464 / JCM 30415 / NCIMB 11848 / C-107), this protein is Elongation factor 4.